Reading from the N-terminus, the 453-residue chain is Ribulose bisphosphate carboxylase large chain (453 aa).

The propeptide occupies 1 to 2 (MS). Pro3 is modified (N-acetylproline). Lys14 carries the post-translational modification N6,N6,N6-trimethyllysine. Positions 123 and 173 each coordinate substrate. Catalysis depends on Lys175, which acts as the Proton acceptor. Lys177 contacts substrate. The Mg(2+) site is built by Lys201, Asp203, and Glu204. At Lys201 the chain carries N6-carboxylysine. The active-site Proton acceptor is His294. Residues Arg295, His327, and Ser379 each contribute to the substrate site.

Belongs to the RuBisCO large chain family. Type I subfamily. As to quaternary structure, heterohexadecamer of 8 large chains and 8 small chains; disulfide-linked. The disulfide link is formed within the large subunit homodimers. The cofactor is Mg(2+). In terms of processing, the disulfide bond which can form in the large chain dimeric partners within the hexadecamer appears to be associated with oxidative stress and protein turnover.

It is found in the plastid. The protein resides in the chloroplast. The catalysed reaction is 2 (2R)-3-phosphoglycerate + 2 H(+) = D-ribulose 1,5-bisphosphate + CO2 + H2O. It catalyses the reaction D-ribulose 1,5-bisphosphate + O2 = 2-phosphoglycolate + (2R)-3-phosphoglycerate + 2 H(+). In terms of biological role, ruBisCO catalyzes two reactions: the carboxylation of D-ribulose 1,5-bisphosphate, the primary event in carbon dioxide fixation, as well as the oxidative fragmentation of the pentose substrate in the photorespiration process. Both reactions occur simultaneously and in competition at the same active site. This is Ribulose bisphosphate carboxylase large chain from Phuopsis stylosa (Caucasian crosswort).